The following is a 331-amino-acid chain: Adenosine deaminase (331 aa).

Zn(2+)-binding residues include H12 and H14. Substrate contacts are provided by H14, D16, and G170. Residue H197 participates in Zn(2+) binding. The Proton donor role is filled by E200. D278 contributes to the Zn(2+) binding site. D279 contributes to the substrate binding site.

The protein belongs to the metallo-dependent hydrolases superfamily. Adenosine and AMP deaminases family. Adenosine deaminase subfamily. The cofactor is Zn(2+).

The enzyme catalyses adenosine + H2O + H(+) = inosine + NH4(+). The catalysed reaction is 2'-deoxyadenosine + H2O + H(+) = 2'-deoxyinosine + NH4(+). Catalyzes the hydrolytic deamination of adenosine and 2-deoxyadenosine. The sequence is that of Adenosine deaminase from Shewanella sp. (strain ANA-3).